A 375-amino-acid polypeptide reads, in one-letter code: Ribonuclease D (375 aa).

Residues 3–169 enclose the 3'-5' exonuclease domain; it reads YQMITTDDAL…LPITAKLMVE (167 aa). Residues 210–289 form the HRDC domain; that stretch reads RTRQLACLQL…EKAQTLPEDA (80 aa).

It belongs to the RNase D family. A divalent metal cation is required as a cofactor.

It localises to the cytoplasm. It catalyses the reaction Exonucleolytic cleavage that removes extra residues from the 3'-terminus of tRNA to produce 5'-mononucleotides.. Functionally, exonuclease involved in the 3' processing of various precursor tRNAs. Initiates hydrolysis at the 3'-terminus of an RNA molecule and releases 5'-mononucleotides. The protein is Ribonuclease D of Escherichia coli (strain K12).